An 81-amino-acid chain; its full sequence is MDPTIAAGALIGGGLIMAGGAIGAGIGDGIAGNALISGVARQPEAQGRLFTPFFITVGLVEAAYFINLAFMALFVFATPVK.

The next 2 membrane-spanning stretches (helical) occupy residues 5-25 and 57-77; these read IAAG…IGAG and VGLV…FVFA.

It belongs to the ATPase C chain family. F-type ATPases have 2 components, F(1) - the catalytic core - and F(0) - the membrane proton channel. F(1) has five subunits: alpha(3), beta(3), gamma(1), delta(1), epsilon(1). F(0) has three main subunits: a(1), b(2) and c(10-14). The alpha and beta chains form an alternating ring which encloses part of the gamma chain. F(1) is attached to F(0) by a central stalk formed by the gamma and epsilon chains, while a peripheral stalk is formed by the delta and b chains.

It localises to the cell membrane. In terms of biological role, f(1)F(0) ATP synthase produces ATP from ADP in the presence of a proton or sodium gradient. F-type ATPases consist of two structural domains, F(1) containing the extramembraneous catalytic core and F(0) containing the membrane proton channel, linked together by a central stalk and a peripheral stalk. During catalysis, ATP synthesis in the catalytic domain of F(1) is coupled via a rotary mechanism of the central stalk subunits to proton translocation. Key component of the F(0) channel; it plays a direct role in translocation across the membrane. A homomeric c-ring of between 10-14 subunits forms the central stalk rotor element with the F(1) delta and epsilon subunits. The protein is ATP synthase subunit c of Mycobacterium marinum (strain ATCC BAA-535 / M).